Here is a 312-residue protein sequence, read N- to C-terminus: MARRGKKKGRAVSGWLVLDKPAGLGSTEAVSKVKWLFGAQKAGHAGTLDPLASGMLPIALGEATKTVPYVMEGAKVYRFTVAWGEERSTDDLEGPVTKSCDKVPVEEDIRALLPRYTGLIMQTPPQFSAVKIGGERAYDLAREGEVVEIAAREVEIGRLDLISIPEPKKAVFEVECGKGTYVRSLARDMGRDLGCFGHVADLRRTEVYPFETQQLVPLKDLEGAAADAETESDRFSALDSYLLDTEAALDGLPEIVLGDDAAGRIRLGNPVIVRGRDAPVQAPEAWASLRGRLIAIGMVEAGMFKPKRVFGL.

D49 functions as the Nucleophile in the catalytic mechanism.

Belongs to the pseudouridine synthase TruB family. Type 1 subfamily.

It carries out the reaction uridine(55) in tRNA = pseudouridine(55) in tRNA. Functionally, responsible for synthesis of pseudouridine from uracil-55 in the psi GC loop of transfer RNAs. This chain is tRNA pseudouridine synthase B, found in Chelativorans sp. (strain BNC1).